A 270-amino-acid polypeptide reads, in one-letter code: Mediator of RNA polymerase II transcription subunit 4 (270 aa).

The disordered stretch occupies residues 1–25 (MAAASSGEKEKERPGGGLGAAGGNS). The residue at position 2 (alanine 2) is an N-acetylalanine. Coiled-coil stretches lie at residues 24–48 (NSTRERLLSALEDLEVLSRELIEML) and 90–131 (HHEM…AKEK). Phosphoserine is present on serine 32. Positions 231 to 270 (MLPPNHSHDFLLEPPGHNKENEDDVEVMSTDSSSSSSDSD) are disordered. A compositionally biased stretch (basic and acidic residues) spans 236 to 250 (HSHDFLLEPPGHNKE). Residues 259 to 270 (STDSSSSSSDSD) show a composition bias toward low complexity.

Belongs to the Mediator complex subunit 4 family. In terms of assembly, component of the Mediator complex, which is composed of MED1, MED4, MED6, MED7, MED8, MED9, MED10, MED11, MED12, MED13, MED13L, MED14, MED15, MED16, MED17, MED18, MED19, MED20, MED21, MED22, MED23, MED24, MED25, MED26, MED27, MED29, MED30, MED31, CCNC, CDK8 and CDC2L6/CDK11. The MED12, MED13, CCNC and CDK8 subunits form a distinct module termed the CDK8 module. Mediator containing the CDK8 module is less active than Mediator lacking this module in supporting transcriptional activation. Individual preparations of the Mediator complex lacking one or more distinct subunits have been variously termed ARC, CRSP, DRIP, PC2, SMCC and TRAP.

The protein resides in the nucleus. Functionally, component of the Mediator complex, a coactivator involved in the regulated transcription of nearly all RNA polymerase II-dependent genes. Mediator functions as a bridge to convey information from gene-specific regulatory proteins to the basal RNA polymerase II transcription machinery. Mediator is recruited to promoters by direct interactions with regulatory proteins and serves as a scaffold for the assembly of a functional preinitiation complex with RNA polymerase II and the general transcription factors. This chain is Mediator of RNA polymerase II transcription subunit 4 (MED4), found in Bos taurus (Bovine).